A 1012-amino-acid chain; its full sequence is Klotho (1012 aa).

The first 33 residues, 1–33 (MPASAPPRRPRPPPPSLSLLLVLLGLGGRRLRA), serve as a signal peptide directing secretion. The Extracellular portion of the chain corresponds to 34 to 981 (EPGDGAQTWA…ECSFFHTRKS (948 aa)). Glycosyl hydrolase-1 regions lie at residues 57–506 (FQGT…KNGF) and 515–953 (LEGT…SNGF). Residues Asn106, Asn159, Asn283, Asn344, Asn607, Asn612, and Asn694 are each glycosylated (N-linked (GlcNAc...) asparagine). A helical transmembrane segment spans residues 982 to 1002 (LLAFIAFLFFASIISLSLIFY). Topologically, residues 1003–1012 (YSKKGRRSYK) are cytoplasmic.

It belongs to the glycosyl hydrolase 1 family. Klotho subfamily. Homodimer. Interacts with FGF23 and FGFR1. N-glycosylated. Present in cortical renal tubules (at protein level). Soluble peptide is present in serum and cerebrospinal fluid. Expressed in kidney, placenta, small intestine and prostate. Down-regulated in renal cell carcinomas, hepatocellular carcinomas, and in chronic renal failure kidney.

The protein localises to the cell membrane. It is found in the apical cell membrane. The protein resides in the secreted. It carries out the reaction a beta-D-glucuronoside + H2O = D-glucuronate + an alcohol. Functionally, may have weak glycosidase activity towards glucuronylated steroids. However, it lacks essential active site Glu residues at positions 239 and 872, suggesting it may be inactive as a glycosidase in vivo. May be involved in the regulation of calcium and phosphorus homeostasis by inhibiting the synthesis of active vitamin D. Essential factor for the specific interaction between FGF23 and FGFR1. The Klotho peptide generated by cleavage of the membrane-bound isoform may be an anti-aging circulating hormone which would extend life span by inhibiting insulin/IGF1 signaling. The polypeptide is Klotho (KL) (Homo sapiens (Human)).